The sequence spans 173 residues: Crossover junction endodeoxyribonuclease RuvC (173 aa).

Active-site residues include D8, E67, and D139. Residues D8, E67, and D139 each contribute to the Mg(2+) site.

Belongs to the RuvC family. In terms of assembly, homodimer which binds Holliday junction (HJ) DNA. The HJ becomes 2-fold symmetrical on binding to RuvC with unstacked arms; it has a different conformation from HJ DNA in complex with RuvA. In the full resolvosome a probable DNA-RuvA(4)-RuvB(12)-RuvC(2) complex forms which resolves the HJ. Mg(2+) is required as a cofactor.

The protein localises to the cytoplasm. The enzyme catalyses Endonucleolytic cleavage at a junction such as a reciprocal single-stranded crossover between two homologous DNA duplexes (Holliday junction).. Functionally, the RuvA-RuvB-RuvC complex processes Holliday junction (HJ) DNA during genetic recombination and DNA repair. Endonuclease that resolves HJ intermediates. Cleaves cruciform DNA by making single-stranded nicks across the HJ at symmetrical positions within the homologous arms, yielding a 5'-phosphate and a 3'-hydroxyl group; requires a central core of homology in the junction. The consensus cleavage sequence is 5'-(A/T)TT(C/G)-3'. Cleavage occurs on the 3'-side of the TT dinucleotide at the point of strand exchange. HJ branch migration catalyzed by RuvA-RuvB allows RuvC to scan DNA until it finds its consensus sequence, where it cleaves and resolves the cruciform DNA. In Shewanella oneidensis (strain ATCC 700550 / JCM 31522 / CIP 106686 / LMG 19005 / NCIMB 14063 / MR-1), this protein is Crossover junction endodeoxyribonuclease RuvC.